The primary structure comprises 213 residues: Octanoyltransferase (213 aa).

Positions 27–209 (AATPDEVWLC…RLLAAMPEPA (183 aa)) constitute a BPL/LPL catalytic domain. Substrate contacts are provided by residues 66–73 (RGGQVTYH), 140–142 (ALG), and 153–155 (GVA). The Acyl-thioester intermediate role is filled by cysteine 171.

It belongs to the LipB family.

It localises to the cytoplasm. It catalyses the reaction octanoyl-[ACP] + L-lysyl-[protein] = N(6)-octanoyl-L-lysyl-[protein] + holo-[ACP] + H(+). It participates in protein modification; protein lipoylation via endogenous pathway; protein N(6)-(lipoyl)lysine from octanoyl-[acyl-carrier-protein]: step 1/2. In terms of biological role, catalyzes the transfer of endogenously produced octanoic acid from octanoyl-acyl-carrier-protein onto the lipoyl domains of lipoate-dependent enzymes. Lipoyl-ACP can also act as a substrate although octanoyl-ACP is likely to be the physiological substrate. This chain is Octanoyltransferase, found in Bordetella petrii (strain ATCC BAA-461 / DSM 12804 / CCUG 43448).